Reading from the N-terminus, the 213-residue chain is FMN-dependent NADH:quinone oxidoreductase 1 (213 aa).

Ser18–Ser20 lines the FMN pocket.

It belongs to the azoreductase type 1 family. In terms of assembly, homodimer. FMN is required as a cofactor.

It catalyses the reaction 2 a quinone + NADH + H(+) = 2 a 1,4-benzosemiquinone + NAD(+). The enzyme catalyses N,N-dimethyl-1,4-phenylenediamine + anthranilate + 2 NAD(+) = 2-(4-dimethylaminophenyl)diazenylbenzoate + 2 NADH + 2 H(+). In terms of biological role, quinone reductase that provides resistance to thiol-specific stress caused by electrophilic quinones. Functionally, also exhibits azoreductase activity. Catalyzes the reductive cleavage of the azo bond in aromatic azo compounds to the corresponding amines. This chain is FMN-dependent NADH:quinone oxidoreductase 1, found in Bacillus cereus (strain ZK / E33L).